Reading from the N-terminus, the 69-residue chain is Putative membrane protein insertion efficiency factor (69 aa).

Belongs to the UPF0161 family.

It localises to the cell membrane. Could be involved in insertion of integral membrane proteins into the membrane. This is Putative membrane protein insertion efficiency factor from Clostridium botulinum (strain Kyoto / Type A2).